We begin with the raw amino-acid sequence, 1004 residues long: 2-oxoglutarate dehydrogenase E1 component (1004 aa).

The protein belongs to the alpha-ketoglutarate dehydrogenase family. Homodimer. Part of the 2-oxoglutarate dehydrogenase (OGDH) complex composed of E1 (2-oxoglutarate dehydrogenase), E2 (dihydrolipoamide succinyltransferase) and E3 (dihydrolipoamide dehydrogenase); the complex contains multiple copies of the three enzymatic components (E1, E2 and E3). Requires thiamine diphosphate as cofactor.

It carries out the reaction N(6)-[(R)-lipoyl]-L-lysyl-[protein] + 2-oxoglutarate + H(+) = N(6)-[(R)-S(8)-succinyldihydrolipoyl]-L-lysyl-[protein] + CO2. Functionally, E1 component of the 2-oxoglutarate dehydrogenase (OGDH) complex which catalyzes the decarboxylation of 2-oxoglutarate, the first step in the conversion of 2-oxoglutarate to succinyl-CoA and CO(2). The sequence is that of 2-oxoglutarate dehydrogenase E1 component from Brucella suis (strain ATCC 23445 / NCTC 10510).